Reading from the N-terminus, the 27-residue chain is Delta-conotoxin TsVIA (27 aa).

3 disulfides stabilise this stretch: C1–C17, C8–C21, and C16–C25.

It belongs to the conotoxin O1 superfamily. In terms of tissue distribution, expressed by the venom duct.

It localises to the secreted. In terms of biological role, delta-conotoxins bind to site 6 of voltage-gated sodium channels (Nav) and inhibit the inactivation process. This toxin inhibits tetrodotoxin(TTX)-sensitive sodium channels. A test on mouse Nav1.6/SCN8A confirms this sensitivity. In Conus tessulatus (Tessellate cone), this protein is Delta-conotoxin TsVIA.